Here is a 530-residue protein sequence, read N- to C-terminus: Serendipity locus protein alpha (530 aa).

In terms of tissue distribution, transient expression in blastoderm from nuclear cycle 11 to the onset of gastrulation.

The protein localises to the cytoplasm. It localises to the cell membrane. Functionally, required for the cellularization of the syncytial blastoderm embryo. Involved in the localization of the actin filaments just prior to and during plasma membrane invagination. Sry-alpha together with nullo and bnk may provide auxiliary functions, by acting both to stabilize a large and dynamic microfilament structure and regulate its functions. The polypeptide is Serendipity locus protein alpha (Sry-alpha) (Drosophila melanogaster (Fruit fly)).